A 460-amino-acid chain; its full sequence is Inactive 7-epi-sesquithujene synthase (460 aa).

Mg(2+)-binding residues include Asp308 and Asp312. Substrate-binding residues include Asp308 and Asp312. The DDXXD motif signature appears at 308 to 312 (DDMFD).

It belongs to the terpene synthase family. As to quaternary structure, monomer. Mg(2+) is required as a cofactor. It depends on Mn(2+) as a cofactor.

The protein localises to the cytoplasm. The protein operates within secondary metabolite biosynthesis; terpenoid biosynthesis. Functionally, non-functional sesquiterpene synthase due to a frameshift removing part of the catalytic site. The sequence is that of Inactive 7-epi-sesquithujene synthase from Zea mays (Maize).